Consider the following 273-residue polypeptide: NH(3)-dependent NAD(+) synthetase (273 aa).

ATP is bound at residue 34–41 (GLSGGIDS). Asp-40 contributes to the Mg(2+) binding site. Deamido-NAD(+) is bound at residue Arg-116. Residue Thr-136 participates in ATP binding. Glu-141 contributes to the Mg(2+) binding site. The ATP site is built by Lys-165 and Ser-187.

This sequence belongs to the NAD synthetase family. Homodimer.

It catalyses the reaction deamido-NAD(+) + NH4(+) + ATP = AMP + diphosphate + NAD(+) + H(+). It participates in cofactor biosynthesis; NAD(+) biosynthesis; NAD(+) from deamido-NAD(+) (ammonia route): step 1/1. In terms of biological role, catalyzes the ATP-dependent amidation of deamido-NAD to form NAD. Uses ammonia as a nitrogen source. This chain is NH(3)-dependent NAD(+) synthetase, found in Trichlorobacter lovleyi (strain ATCC BAA-1151 / DSM 17278 / SZ) (Geobacter lovleyi).